Reading from the N-terminus, the 780-residue chain is Calpain clp-1 (780 aa).

The segment covering 269 to 282 has biased composition (basic and acidic residues); sequence DVDPFVRPGPDPDR. The tract at residues 269 to 300 is disordered; sequence DVDPFVRPGPDPDRGGGGSGPSPISPRPTTEP. In terms of domain architecture, Calpain catalytic spans 316 to 611; sequence LFEDPQFLAN…FEKMEICNLG (296 aa). Active-site residues include C371, H527, and N551.

Belongs to the peptidase C2 family. As to expression, expressed in muscle and neuronal tissues. Expressed in the ventral and dorsal nerve cord, intestinal and hypodermal tissues.

Its subcellular location is the cytoplasm. It is found in the myofibril. It localises to the sarcomere. The protein resides in the m line. Functionally, calcium-regulated non-lysosomal thiol-protease which catalyzes limited proteolysis of substrates. Required for assembly and maintenance of integrin attachment complexes which are essential for maintenance of adult muscle. Proteolytic activity is activated in response to increased intracellular Ca(2+) levels during cell degeneration and promotes necrotic cell death. The chain is Calpain clp-1 from Caenorhabditis elegans.